A 659-amino-acid chain; its full sequence is Biosynthetic arginine decarboxylase 2 (659 aa).

Lys-119 carries the post-translational modification N6-(pyridoxal phosphate)lysine. 311-321 (LNVGGGLAVDY) contributes to the substrate binding site.

Belongs to the Orn/Lys/Arg decarboxylase class-II family. SpeA subfamily. Requires Mg(2+) as cofactor. Pyridoxal 5'-phosphate serves as cofactor.

The catalysed reaction is L-arginine + H(+) = agmatine + CO2. In terms of biological role, catalyzes the biosynthesis of agmatine from arginine. The chain is Biosynthetic arginine decarboxylase 2 (speA2) from Synechocystis sp. (strain ATCC 27184 / PCC 6803 / Kazusa).